The chain runs to 407 residues: Protein COS9 (407 aa).

A run of 3 helical transmembrane segments spans residues 75 to 95, 98 to 118, and 261 to 281; these read TWLL…IKSI, IFPF…LPNI, and IFNL…YVSW.

This sequence belongs to the DUP/COS family.

It is found in the membrane. The polypeptide is Protein COS9 (COS9) (Saccharomyces cerevisiae (strain ATCC 204508 / S288c) (Baker's yeast)).